Reading from the N-terminus, the 166-residue chain is Putative transmembrane protein encoded by LINC00477 (166 aa).

N-linked (GlcNAc...) asparagine glycosylation occurs at asparagine 7. 3 consecutive transmembrane segments (helical) span residues 15–35 (VSSF…FFLC), 41–61 (MTGC…VLGP), and 63–83 (PMGM…RFLG). Residues 127–166 (LPVPHPPSPLSKCPQHPRPRRTKGPGLRKLWGPGPPFFPS) form a disordered region.

The protein localises to the membrane. This Homo sapiens (Human) protein is Putative transmembrane protein encoded by LINC00477 (LINC00477).